The following is a 357-amino-acid chain: tRNA-specific 2-thiouridylase MnmA (357 aa).

ATP contacts are provided by residues 10-17 (GISGGVDS) and Ile-36. Catalysis depends on Cys-98, which acts as the Nucleophile. A disulfide bridge links Cys-98 with Cys-194. Gly-122 is a binding site for ATP. Residues 144-146 (KDQ) are interaction with tRNA. Cys-194 (cysteine persulfide intermediate) is an active-site residue. An interaction with tRNA region spans residues 303–304 (RY).

The protein belongs to the MnmA/TRMU family.

The protein localises to the cytoplasm. It carries out the reaction S-sulfanyl-L-cysteinyl-[protein] + uridine(34) in tRNA + AH2 + ATP = 2-thiouridine(34) in tRNA + L-cysteinyl-[protein] + A + AMP + diphosphate + H(+). Functionally, catalyzes the 2-thiolation of uridine at the wobble position (U34) of tRNA, leading to the formation of s(2)U34. The protein is tRNA-specific 2-thiouridylase MnmA of Chlorobium phaeovibrioides (strain DSM 265 / 1930) (Prosthecochloris vibrioformis (strain DSM 265)).